We begin with the raw amino-acid sequence, 1273 residues long: Protein sax-3 (1273 aa).

The signal sequence occupies residues 1-23 (MFNRKTLLCTILLVLQAVIRSFC). Ig-like C2-type domains follow at residues 31 to 127 (PVII…GSLK), 133 to 222 (EDFR…ARLS), 227 to 312 (PKFE…AHLR), 317 to 411 (PSFQ…LKVT), and 425 to 511 (PTIE…ASLT). 5 disulfides stabilise this stretch: cysteine 52-cysteine 110, cysteine 154-cysteine 205, cysteine 248-cysteine 296, cysteine 338-cysteine 393, and cysteine 446-cysteine 495. Fibronectin type-III domains follow at residues 533-628 (SPTQ…TSKP), 653-750 (QLIK…TAEA), and 755-849 (PPED…MNQD). A helical transmembrane segment spans residues 874–894 (VPVIVIVAILIIFVVIIIAYC). The disordered stretch occupies residues 1033–1273 (APAMPTNPVP…NNGIVTQEQT (241 aa)). A compositionally biased stretch (pro residues) spans 1037–1046 (PTNPVPPEPP). A compositionally biased stretch (polar residues) spans 1096 to 1105 (QLHSSDGTGS). Positions 1106 to 1115 (SKERTGERRT) are enriched in basic and acidic residues. Residues 1125 to 1136 (IPPPPSNPPPPG) are compositionally biased toward pro residues. A compositionally biased stretch (polar residues) spans 1145-1156 (QTATRRQLNRGS). A compositionally biased stretch (acidic residues) spans 1207–1222 (MDDDGGSSEADGENSE). Polar residues predominate over residues 1240 to 1273 (SASTLAHSCYGTNGTAQRFRSIPRNNGIVTQEQT).

The protein belongs to the immunoglobulin superfamily. ROBO/SAX3 family. As to expression, expressed in the AVG interneuron and the male-specific sensory neuron HOA.

It is found in the membrane. In terms of biological role, required to confine migrating sex myoblasts to the ventral muscle quadrants during their migration through the body and for multiple aspects of sensory, motor, and interneuron axon guidance. The chain is Protein sax-3 from Caenorhabditis elegans.